Consider the following 124-residue polypeptide: Small ribosomal subunit protein uS12 (124 aa).

Asp-90 is modified (3-methylthioaspartic acid).

The protein belongs to the universal ribosomal protein uS12 family. As to quaternary structure, part of the 30S ribosomal subunit. Contacts proteins S8 and S17. May interact with IF1 in the 30S initiation complex.

Functionally, with S4 and S5 plays an important role in translational accuracy. In terms of biological role, interacts with and stabilizes bases of the 16S rRNA that are involved in tRNA selection in the A site and with the mRNA backbone. Located at the interface of the 30S and 50S subunits, it traverses the body of the 30S subunit contacting proteins on the other side and probably holding the rRNA structure together. The combined cluster of proteins S8, S12 and S17 appears to hold together the shoulder and platform of the 30S subunit. In Wolbachia pipientis wMel, this protein is Small ribosomal subunit protein uS12.